A 259-amino-acid chain; its full sequence is Type III pantothenate kinase (259 aa).

6–13 (DVGNTNCT) serves as a coordination point for ATP. 107 to 110 (GSDR) serves as a coordination point for substrate. D109 (proton acceptor) is an active-site residue. Position 129 (D129) interacts with K(+). T132 is a binding site for ATP. T184 is a substrate binding site.

Belongs to the type III pantothenate kinase family. In terms of assembly, homodimer. NH4(+) is required as a cofactor. It depends on K(+) as a cofactor.

The protein localises to the cytoplasm. The enzyme catalyses (R)-pantothenate + ATP = (R)-4'-phosphopantothenate + ADP + H(+). It participates in cofactor biosynthesis; coenzyme A biosynthesis; CoA from (R)-pantothenate: step 1/5. Its function is as follows. Catalyzes the phosphorylation of pantothenate (Pan), the first step in CoA biosynthesis. This Listeria innocua serovar 6a (strain ATCC BAA-680 / CLIP 11262) protein is Type III pantothenate kinase.